We begin with the raw amino-acid sequence, 209 residues long: Ion-translocating oxidoreductase complex subunit G (209 aa).

A helical transmembrane segment spans residues 9–29 (GITLAIFAALTTGLTAVVNSL). FMN phosphoryl threonine is present on Thr175.

Belongs to the RnfG family. In terms of assembly, the complex is composed of six subunits: RnfA, RnfB, RnfC, RnfD, RnfE and RnfG. The cofactor is FMN.

The protein resides in the cell inner membrane. In terms of biological role, part of a membrane-bound complex that couples electron transfer with translocation of ions across the membrane. This Photorhabdus laumondii subsp. laumondii (strain DSM 15139 / CIP 105565 / TT01) (Photorhabdus luminescens subsp. laumondii) protein is Ion-translocating oxidoreductase complex subunit G.